The sequence spans 137 residues: MATIHVDVVSAEQEIFSGDAKFVALPGEAGELGILPGHTPLITRIKPGAVRIETEAGEEFVFVAGGILEVQPKHVTVLADTAIRGHDLDEAKANEAKRAAEEALQNQSSDLDLARAQGELAVATAQLAAIARLRRKR.

Belongs to the ATPase epsilon chain family. F-type ATPases have 2 components, CF(1) - the catalytic core - and CF(0) - the membrane proton channel. CF(1) has five subunits: alpha(3), beta(3), gamma(1), delta(1), epsilon(1). CF(0) has three main subunits: a, b and c.

Its subcellular location is the cell inner membrane. Produces ATP from ADP in the presence of a proton gradient across the membrane. In Ralstonia nicotianae (strain ATCC BAA-1114 / GMI1000) (Ralstonia solanacearum), this protein is ATP synthase epsilon chain 1 (atpC1).